A 597-amino-acid polypeptide reads, in one-letter code: 66 kDa protein (597 aa).

5 disordered regions span residues 62–82, 160–198, 218–315, 329–411, and 535–586; these read VRLQ…PSLQ, HSVP…FRQH, NQLA…SCRV, HFKS…LHHD, and SSPQ…ASAL. Polar residues predominate over residues 64-80; sequence LQSSPPRGPQSDRNLPS. Residues 218-234 are compositionally biased toward polar residues; it reads NQLAQAQQHPLPSSKPL. Residues 273-291 are compositionally biased toward low complexity; sequence PSSRGHLPSSTSSSSPRSN. A compositionally biased stretch (polar residues) spans 305–315; that stretch reads SNSQDLRSCRV. The segment covering 389–400 has biased composition (basic residues); that stretch reads QTHHARLPHSKR. Positions 535–574 are enriched in low complexity; sequence SSPQSHSSESLRGDSPPSSHLPSSPSSACSGDSFASCSSF. A compositionally biased stretch (polar residues) spans 575–584; that stretch reads GPSNPTSSAS.

Belongs to the tymoviridae protein p69 family.

The protein is 66 kDa protein of Ononis.